The following is a 172-amino-acid chain: NADH-quinone oxidoreductase subunit B (172 aa).

Residues Cys46, Cys47, Cys111, and Cys141 each contribute to the [4Fe-4S] cluster site.

This sequence belongs to the complex I 20 kDa subunit family. In terms of assembly, NDH-1 is composed of 14 different subunits. Subunits NuoB, C, D, E, F, and G constitute the peripheral sector of the complex. [4Fe-4S] cluster serves as cofactor.

The protein resides in the cell membrane. It catalyses the reaction a quinone + NADH + 5 H(+)(in) = a quinol + NAD(+) + 4 H(+)(out). Its function is as follows. NDH-1 shuttles electrons from NADH, via FMN and iron-sulfur (Fe-S) centers, to quinones in the respiratory chain. The immediate electron acceptor for the enzyme in this species is believed to be a menaquinone. Couples the redox reaction to proton translocation (for every two electrons transferred, four hydrogen ions are translocated across the cytoplasmic membrane), and thus conserves the redox energy in a proton gradient. This is NADH-quinone oxidoreductase subunit B from Bacillus cereus (strain G9842).